A 486-amino-acid polypeptide reads, in one-letter code: Hematopoietic lineage cell-specific protein (486 aa).

The interval 27 to 66 (FVNDISEKEQRWGAKTIEGSGRTEHINIHQLRNKVSEEHD) is involved in HAX-1 binding. At Lys-41 the chain carries N6-acetyllysine. Cortactin repeat units lie at residues 79–115 (ASHG…SQTD), 116–152 (AAKG…SQKD), and 153–189 (YSRG…SQRD). At Lys-123 the chain carries N6-acetyllysine. Tyr-140 bears the Phosphotyrosine mark. The Cortactin 4; truncated repeat unit spans residues 190–212 (YAKGFGGQYGIQKDRVDKSAVGF). Lys-192 carries the N6-acetyllysine modification. Tyr-198 carries the phosphotyrosine modification. A Phosphotyrosine; by FGR modification is found at Tyr-222. An N6-acetyllysine modification is found at Lys-241. Residues 243 to 276 (ESMAEEKRKREEEEKAQQVARRQQERKAVTKRSP) are compositionally biased toward basic and acidic residues. Positions 243 to 419 (ESMAEEKRKR…SALAGSSGCP (177 aa)) are disordered. Ser-275 is subject to Phosphoserine. The residue at position 308 (Thr-308) is a Phosphothreonine. The segment covering 315–324 (EPVRTSREHP) has biased composition (basic and acidic residues). Composition is skewed to acidic residues over residues 353-383 (QVEE…DVEE) and 390-405 (EDEP…EPED). 2 positions are modified to phosphotyrosine; by SYK and FES: Tyr-378 and Tyr-397. A compositionally biased stretch (low complexity) spans 406–419 (SSFSSALAGSSGCP). Residues 428-486 (ALGISAVAVYDYQGEGSDELSFDPDDVITDIEMVDEGWWRGRCHGHFGLFPANYVKLLE) form the SH3 domain.

Associates with the SH2 and SH3 domains of LCK. Binding to he LCK SH3 domain occurs constitutively, while binding to the LCK SH2 domain occurs only upon TCR stimulation. A similar binding pattern was observed with LYN, but not with FYN in which the FYN SH2 region associates upon TCR stimulation but the FYN SH3 region does not associate regardless of TCR stimulation. Directly associates with HAX1, through binding to its C-terminal region. Interacts with HS1BP3. Interacts with FES/FPS. Interacts (via SH2 domain) with FGR. Forms a multiprotein complex with LYN and ANKRD54. In terms of processing, phosphorylated by FES. Phosphorylated by LYN, FYN and FGR after cross-linking of surface IgM on B-cells. Phosphorylation by LYN, FYN and FGR requires prior phosphorylation by SYK or FES. In terms of tissue distribution, expressed only in tissues and cells of hematopoietic origin.

The protein localises to the membrane. The protein resides in the cytoplasm. Its subcellular location is the mitochondrion. In terms of biological role, substrate of the antigen receptor-coupled tyrosine kinase. Plays a role in antigen receptor signaling for both clonal expansion and deletion in lymphoid cells. May also be involved in the regulation of gene expression. In Homo sapiens (Human), this protein is Hematopoietic lineage cell-specific protein (HCLS1).